The sequence spans 516 residues: Maturase K (516 aa).

It belongs to the intron maturase 2 family. MatK subfamily.

It localises to the plastid. The protein localises to the chloroplast. Functionally, usually encoded in the trnK tRNA gene intron. Probably assists in splicing its own and other chloroplast group II introns. This chain is Maturase K, found in Disporum sessile (Japanese fairy bells).